The following is a 368-amino-acid chain: Spermidine/putrescine import ATP-binding protein PotA (368 aa).

The ABC transporter domain occupies 8–238; sequence IELKNVSKIF…PVNLFVARFV (231 aa). 40–47 is an ATP binding site; it reads GPSGCGKT.

The protein belongs to the ABC transporter superfamily. Spermidine/putrescine importer (TC 3.A.1.11.1) family. The complex is composed of two ATP-binding proteins (PotA), two transmembrane proteins (PotB and PotC) and a solute-binding protein (PotD).

Its subcellular location is the cell membrane. The enzyme catalyses ATP + H2O + polyamine-[polyamine-binding protein]Side 1 = ADP + phosphate + polyamineSide 2 + [polyamine-binding protein]Side 1.. Its function is as follows. Part of the ABC transporter complex PotABCD involved in spermidine/putrescine import. Responsible for energy coupling to the transport system. This Lawsonia intracellularis (strain PHE/MN1-00) protein is Spermidine/putrescine import ATP-binding protein PotA.